A 545-amino-acid chain; its full sequence is Transducer protein Htr7 (545 aa).

Helical transmembrane passes span 10 to 30 (AVVAPLGDAVGAIGFGAAAAL), 44 to 64 (FWMAFTFASLLGVTWTVSLML), and 80 to 100 (PLMATTVAVFAIGGTATLAIV). The tract at residues 111–157 (AQRRQEAEEERAEAERAREKAEQKQAEAERQTAEAESAKQDARERSA) is disordered. Over residues 123 to 157 (EAERAREKAEQKQAEAERQTAEAESAKQDARERSA) the composition is skewed to basic and acidic residues. Positions 164–217 (ADLESQATEVGATLEAASDGDLTARVDATTDNAEIAEVATVVNDMLTTMERTID) constitute an HAMP domain. One can recognise a Methyl-accepting transducer domain in the interval 236-476 (GAKEIQDASQ…RVVSSVDDIA (241 aa)). Glu281 carries the glutamate methyl ester (Glu) modification. The disordered stretch occupies residues 521-545 (LNEFRTEATGTAHGEATDAPAGQSD). Residues 527–539 (EATGTAHGEATDA) show a composition bias toward low complexity.

It belongs to the methyl-accepting chemotaxis (MCP) protein family. Methylated by CheR.

Its subcellular location is the cell membrane. Its function is as follows. Potentially involved in chemo- or phototactic signal transduction. The sequence is that of Transducer protein Htr7 (htr7) from Halobacterium salinarum (strain ATCC 29341 / DSM 671 / R1).